Here is a 159-residue protein sequence, read N- to C-terminus: Large ribosomal subunit protein bL17 (159 aa).

Low complexity predominate over residues 119-138 (PVTPKAKPAKSTAKAAPKSK). The tract at residues 119-159 (PVTPKAKPAKSTAKAAPKSKAPVEETPDEPASEETAEAEAD) is disordered. Over residues 143-159 (ETPDEPASEETAEAEAD) the composition is skewed to acidic residues.

Belongs to the bacterial ribosomal protein bL17 family. Part of the 50S ribosomal subunit. Contacts protein L32.

This is Large ribosomal subunit protein bL17 from Leifsonia xyli subsp. xyli (strain CTCB07).